A 135-amino-acid chain; its full sequence is NADPH-dependent 7-cyano-7-deazaguanine reductase (135 aa).

Catalysis depends on Cys-48, which acts as the Thioimide intermediate. Asp-55 serves as the catalytic Proton donor. Residues 70-72 (LEL) and 89-90 (HE) contribute to the substrate site.

The protein belongs to the GTP cyclohydrolase I family. QueF type 1 subfamily.

It is found in the cytoplasm. The catalysed reaction is 7-aminomethyl-7-carbaguanine + 2 NADP(+) = 7-cyano-7-deazaguanine + 2 NADPH + 3 H(+). It participates in tRNA modification; tRNA-queuosine biosynthesis. In terms of biological role, catalyzes the NADPH-dependent reduction of 7-cyano-7-deazaguanine (preQ0) to 7-aminomethyl-7-deazaguanine (preQ1). This chain is NADPH-dependent 7-cyano-7-deazaguanine reductase, found in Prochlorococcus marinus (strain SARG / CCMP1375 / SS120).